We begin with the raw amino-acid sequence, 870 residues long: Protein RRP6-like 2 (870 aa).

The 3'-5' exonuclease domain maps to 263-428 (VQEVKDLKEL…YIYDLIKLEL (166 aa)). Residues 479–559 (NAAQLAIVAG…RQSMQHYAAF (81 aa)) form the HRDC domain. Disordered regions lie at residues 583–605 (SEKKDLHTGDVASPSLKENSSQL), 649–668 (GALLGNAASKKKSRTDEKVK), 688–775 (TEKV…EDEP), and 821–870 (FGEG…SFKN). Composition is skewed to basic and acidic residues over residues 720-729 (SKEDGVKELK) and 821-834 (FGEGHKGRQGKREA). The span at 840–849 (KGSTQEQSEF) shows a compositional bias: polar residues.

It is found in the nucleus. The protein resides in the nucleolus. It localises to the cytoplasm. Its function is as follows. Acts as an important epigenetic regulator through multiple silencing mechanisms. Involved in association with RRP6L1 in the silencing of the solo LTR locus. Controls levels of non-coding RNAs (ncRNAs) from the solo LTR locus. Seems to function independently of the RNA-mediated gene silencing (RdDM) pathway. Functions redundantly with RRP6L1 in the regulation of FLC locus. Participates in the maintenance of trimethylated 'Lys-27' (H3K27me3) at FLC locus via the regulation of antisense long non-coding RNAs (lncRNAs) and the regulation of diverse antisense RNAs derived from the FLC locus. Seems not involved in the exosomal RNA degradation. May be involved in poly(A)-mediated RNA degradation. In Arabidopsis thaliana (Mouse-ear cress), this protein is Protein RRP6-like 2.